The primary structure comprises 394 residues: Flap endonuclease 1 (394 aa).

The interval 1-103 is N-domain; sequence MGIKSLYQII…GELAKRTMRK (103 aa). Asp34 provides a ligand contact to Mg(2+). Arg69 serves as a coordination point for DNA. Position 85 (Asp85) interacts with Mg(2+). Positions 102-123 are disordered; that stretch reads RKAEAQEAAEEAKETGTAEDVE. The interval 121-252 is I-domain; it reads DVEKFSRRTV…NTALKMIRDH (132 aa). The Mg(2+) site is built by Glu157, Glu159, Asp178, and Asp180. Glu157 is a DNA binding site. 2 residues coordinate DNA: Gly230 and Asp232. Residue Asp232 participates in Mg(2+) binding. Residues 340 to 348 form an interaction with PCNA region; that stretch reads QQSRLEGFF. Residues 349–394 form a disordered region; sequence KPVAKTEQQKATAKRKAEEKAELAKKKKKEDAKAKRAMGAKPRGAR. Residues 363–382 show a composition bias toward basic and acidic residues; that stretch reads RKAEEKAELAKKKKKEDAKA. Basic residues predominate over residues 383–394; that stretch reads KRAMGAKPRGAR.

This sequence belongs to the XPG/RAD2 endonuclease family. FEN1 subfamily. In terms of assembly, interacts with PCNA. Three molecules of FEN1 bind to one PCNA trimer with each molecule binding to one PCNA monomer. PCNA stimulates the nuclease activity without altering cleavage specificity. Mg(2+) is required as a cofactor. Post-translationally, phosphorylated. Phosphorylation upon DNA damage induces relocalization to the nuclear plasma.

The protein resides in the nucleus. It is found in the nucleolus. It localises to the nucleoplasm. The protein localises to the mitochondrion. Its function is as follows. Structure-specific nuclease with 5'-flap endonuclease and 5'-3' exonuclease activities involved in DNA replication and repair. During DNA replication, cleaves the 5'-overhanging flap structure that is generated by displacement synthesis when DNA polymerase encounters the 5'-end of a downstream Okazaki fragment. It enters the flap from the 5'-end and then tracks to cleave the flap base, leaving a nick for ligation. Also involved in the long patch base excision repair (LP-BER) pathway, by cleaving within the apurinic/apyrimidinic (AP) site-terminated flap. Acts as a genome stabilization factor that prevents flaps from equilibrating into structures that lead to duplications and deletions. Also possesses 5'-3' exonuclease activity on nicked or gapped double-stranded DNA, and exhibits RNase H activity. Also involved in replication and repair of rDNA and in repairing mitochondrial DNA. The polypeptide is Flap endonuclease 1 (Arthroderma otae (strain ATCC MYA-4605 / CBS 113480) (Microsporum canis)).